Reading from the N-terminus, the 78-residue chain is Metallothionein-like protein type 2 (78 aa).

The protein belongs to the metallothionein superfamily. Type 15 family.

In terms of biological role, metallothioneins have a high content of cysteine residues that bind various heavy metals. This is Metallothionein-like protein type 2 from Nicotiana glutinosa (Tobacco).